The following is a 156-amino-acid chain: Transcription antitermination protein NusB (156 aa).

The protein belongs to the NusB family.

In terms of biological role, involved in transcription antitermination. Required for transcription of ribosomal RNA (rRNA) genes. Binds specifically to the boxA antiterminator sequence of the ribosomal RNA (rrn) operons. This Rickettsia rickettsii (strain Iowa) protein is Transcription antitermination protein NusB.